We begin with the raw amino-acid sequence, 50 residues long: Thymosin beta-4 (50 aa).

A disordered region spans residues 1–50 (MLLPATMSDKPDMAEIEKFDKSKLKKTETQEKNPLPSKETIEQEKQAGES). At Ser-8 the chain carries Phosphoserine. Over residues 9-31 (DKPDMAEIEKFDKSKLKKTETQE) the composition is skewed to basic and acidic residues. Residue Lys-10 is modified to N6-acetyllysine. Lys-18 carries the post-translational modification N6-acetyllysine; alternate. Residue Lys-18 forms a Glycyl lysine isopeptide (Lys-Gly) (interchain with G-Cter in SUMO2); alternate linkage. Phosphothreonine is present on Thr-29. Position 32 is an N6-acetyllysine (Lys-32). Ser-37 carries the post-translational modification Phosphoserine. Lys-38 carries the N6-acetyllysine modification. Positions 39 to 50 (ETIEQEKQAGES) are enriched in basic and acidic residues. Thr-40 is modified (phosphothreonine). At Lys-45 the chain carries N6-acetyllysine.

It belongs to the thymosin beta family. In terms of assembly, identified in a complex composed of ACTA1, COBL, GSN AND TMSB4X. Interacts with SERPINB1. In terms of processing, acSDKP is inactivated by ACE, which removes the dipeptide Lys-Pro from its C-terminus. Originally found in thymus but it is widely distributed in many tissues.

Its subcellular location is the cytoplasm. The protein resides in the cytoskeleton. In terms of biological role, plays an important role in the organization of the cytoskeleton. Binds to and sequesters actin monomers (G actin) and therefore inhibits actin polymerization. Its function is as follows. Potent inhibitor of bone marrow derived stem cell differentiation. Acts by inhibits the entry of hematopoietic pluripotent stem cells into the S-phase. The chain is Thymosin beta-4 (Tmsb4x) from Mus musculus (Mouse).